The chain runs to 720 residues: Catalase-peroxidase (720 aa).

The segment at residues 94-222 (WHAAGTYRIA…LAAVTMGLIY (129 aa)) is a cross-link (tryptophyl-tyrosyl-methioninium (Trp-Tyr) (with M-248)). The active-site Proton acceptor is H95. The tryptophyl-tyrosyl-methioninium (Tyr-Met) (with W-94) cross-link spans 222 to 248 (YVNPEGVDGNPDPLKTAHDVRVTFARM). H263 contacts heme b.

Belongs to the peroxidase family. Peroxidase/catalase subfamily. Homodimer. Requires heme b as cofactor. Formation of the three residue Trp-Tyr-Met cross-link is important for the catalase, but not the peroxidase activity of the enzyme.

It carries out the reaction H2O2 + AH2 = A + 2 H2O. The enzyme catalyses 2 H2O2 = O2 + 2 H2O. Bifunctional enzyme with both catalase and broad-spectrum peroxidase activity. In Synechococcus elongatus (strain ATCC 33912 / PCC 7942 / FACHB-805) (Anacystis nidulans R2), this protein is Catalase-peroxidase.